The chain runs to 578 residues: Acyl-coenzyme A synthetase ACSM5, mitochondrial (578 aa).

The N-terminal 22 residues, 1 to 22 (MRLWLRGLACQALRSSWGVCRI), are a transit peptide targeting the mitochondrion. An N6-acetyllysine; alternate modification is found at Lys-96. Lys-96 is modified (N6-succinyllysine; alternate). Lys-151 is modified (N6-acetyllysine). 229 to 237 (TSGTTGAPK) serves as a coordination point for ATP. The residue at position 302 (Lys-302) is an N6-acetyllysine; alternate. Lys-302 is subject to N6-succinyllysine; alternate. Lys-335 is modified (N6-acetyllysine). Residues 367–372 (EGYGQS), Asp-454, Arg-469, and Lys-565 contribute to the ATP site.

This sequence belongs to the ATP-dependent AMP-binding enzyme family. Mg(2+) serves as cofactor. It depends on Mn(2+) as a cofactor.

The protein localises to the mitochondrion matrix. The catalysed reaction is a medium-chain fatty acid + ATP + CoA = a medium-chain fatty acyl-CoA + AMP + diphosphate. In terms of biological role, catalyzes the activation of fatty acids by CoA to produce an acyl-CoA, the first step in fatty acid metabolism. The chain is Acyl-coenzyme A synthetase ACSM5, mitochondrial (Acsm5) from Mus musculus (Mouse).